The following is a 330-amino-acid chain: Tyrosine-protein phosphatase yvh1 (330 aa).

The Tyrosine-protein phosphatase domain occupies 45 to 187; that stretch reads NDLSEISKNL…LRVYFECNYQ (143 aa). The Phosphocysteine intermediate role is filled by cysteine 131.

The protein belongs to the protein-tyrosine phosphatase family. Non-receptor class dual specificity subfamily.

The protein resides in the cytoplasm. The protein localises to the nucleus. The enzyme catalyses O-phospho-L-tyrosyl-[protein] + H2O = L-tyrosyl-[protein] + phosphate. In terms of biological role, may be directly involved in signal transduction and/or cell cycle regulation. It is necessary for maintaining growth rate or spore germination. Could show both activity toward tyrosine-protein phosphate as well as with serine-protein phosphate. The polypeptide is Tyrosine-protein phosphatase yvh1 (yvh1) (Schizosaccharomyces pombe (strain 972 / ATCC 24843) (Fission yeast)).